A 717-amino-acid chain; its full sequence is DNA ligase (717 aa).

NAD(+)-binding positions include 44–48 (DADYD), 93–94 (SL), and glutamate 127. Lysine 129 serves as the catalytic N6-AMP-lysine intermediate. Positions 150, 186, 302, and 326 each coordinate NAD(+). Cysteine 431, cysteine 434, cysteine 455, and cysteine 461 together coordinate Zn(2+). The 79-residue stretch at 639–717 (ATDSPVAGKT…EDEWLALIGG (79 aa)) folds into the BRCT domain.

It belongs to the NAD-dependent DNA ligase family. LigA subfamily. It depends on Mg(2+) as a cofactor. The cofactor is Mn(2+).

The catalysed reaction is NAD(+) + (deoxyribonucleotide)n-3'-hydroxyl + 5'-phospho-(deoxyribonucleotide)m = (deoxyribonucleotide)n+m + AMP + beta-nicotinamide D-nucleotide.. DNA ligase that catalyzes the formation of phosphodiester linkages between 5'-phosphoryl and 3'-hydroxyl groups in double-stranded DNA using NAD as a coenzyme and as the energy source for the reaction. It is essential for DNA replication and repair of damaged DNA. The protein is DNA ligase of Rhizobium meliloti (strain 1021) (Ensifer meliloti).